The chain runs to 957 residues: Glutamyl aminopeptidase (957 aa).

Residues 1-18 lie on the Cytoplasmic side of the membrane; that stretch reads MNFAEREGSKRYCIQTKH. The helical; Signal-anchor for type II membrane protein transmembrane segment at 19–39 threads the bilayer; sequence VAILCAVVVGVGLIVGLAVGL. Topologically, residues 40-957 are extracellular; sequence TRSCDSSGDG…EWFFNLLESG (918 aa). The interval 44-83 is disordered; that stretch reads DSSGDGGPGTAPAPSHLPSSTASPSGPPAQDQDICPASED. N-linked (GlcNAc...) asparagine; atypical glycosylation is present at Asn-98. N-linked (GlcNAc...) asparagine glycosylation is found at Asn-124 and Asn-197. Glu-223 is a substrate binding site. N-linked (GlcNAc...) asparagine glycans are attached at residues Asn-324 and Asn-340. 357–361 provides a ligand contact to substrate; that stretch reads GAMEN. His-393 serves as a coordination point for Zn(2+). Glu-394 (proton acceptor) is an active-site residue. His-397 and Glu-416 together coordinate Zn(2+). 9 N-linked (GlcNAc...) asparagine glycosylation sites follow: Asn-554, Asn-589, Asn-597, Asn-607, Asn-678, Asn-763, Asn-773, Asn-801, and Asn-828. Position 887 (Arg-887) interacts with substrate.

Belongs to the peptidase M1 family. As to quaternary structure, homodimer; disulfide-linked. Zn(2+) is required as a cofactor. Expressed in choriocarcinoma cancer cell lines (at protein level). Expressed by epithelial cells of the proximal tubule cells and the glomerulus of the nephron. Also found in a variety of other tissues.

Its subcellular location is the cell membrane. The enzyme catalyses Release of N-terminal glutamate (and to a lesser extent aspartate) from a peptide.. Its activity is regulated as follows. Substrate specificity is modulated by calcium which enhances the enzymatic activity for cleavage of acidic residues while reducing its activity with basic residues. Inhibited by aminopeptidase inhibitors amastatin and bestatin. In terms of biological role, regulates central hypertension through its calcium-modulated preference to cleave N-terminal acidic residues from peptides such as angiotensin II. The sequence is that of Glutamyl aminopeptidase (ENPEP) from Homo sapiens (Human).